The sequence spans 113 residues: Ig heavy chain V-III region ABE-47N (113 aa).

Residues 1 to 113 form the Ig-like domain; that stretch reads EVKLEESGGG…YWGQGTLVTV (113 aa). Residues cysteine 22 and cysteine 98 are joined by a disulfide bond.

This is Ig heavy chain V-III region ABE-47N from Mus musculus (Mouse).